Here is a 337-residue protein sequence, read N- to C-terminus: Protein hairy (337 aa).

An interaction with Topors region spans residues 29–48 (KSDRRSNKPIMEKRRRARIN). In terms of domain architecture, bHLH spans 31–88 (DRRSNKPIMEKRRRARINNCLNELKTLILDATKKDPARHSKLEKADILEKTVKHLQEL). The 30-residue stretch at 107-136 (FKAGFADCVNEVSRFPGIEPAQRRRLLQHL) folds into the Orange domain. Disordered regions lie at residues 146–178 (ELHQ…SQQG) and 259–311 (MPQR…VIQR). The segment covering 263–301 (TASTGSASSHSSAGYESAPGSSSSCSYAPPSPANSSYEP) has biased composition (low complexity). The short motif at 334-337 (WRPW) is the WRPW motif element.

In terms of assembly, transcription repression requires formation of a complex with a corepressor protein (Groucho). Interacts with gro (via WPRW motif) and Topors. Post-translationally, ubiquitinated by Topors.

It localises to the nucleus. Functionally, pair-rule protein that regulates embryonic segmentation and adult bristle patterning. Transcriptional repressor of genes that require a bHLH protein for their transcription (e.g. ftz). The chain is Protein hairy from Drosophila melanogaster (Fruit fly).